The primary structure comprises 302 residues: tRNA-cytidine(32) 2-sulfurtransferase (302 aa).

Residues 43-48 (SGGKDS) carry the PP-loop motif motif. 3 residues coordinate [4Fe-4S] cluster: Cys118, Cys121, and Cys209.

Belongs to the TtcA family. In terms of assembly, homodimer. Requires Mg(2+) as cofactor. [4Fe-4S] cluster is required as a cofactor.

The protein localises to the cytoplasm. The catalysed reaction is cytidine(32) in tRNA + S-sulfanyl-L-cysteinyl-[cysteine desulfurase] + AH2 + ATP = 2-thiocytidine(32) in tRNA + L-cysteinyl-[cysteine desulfurase] + A + AMP + diphosphate + H(+). The protein operates within tRNA modification. Functionally, catalyzes the ATP-dependent 2-thiolation of cytidine in position 32 of tRNA, to form 2-thiocytidine (s(2)C32). The sulfur atoms are provided by the cysteine/cysteine desulfurase (IscS) system. In Polynucleobacter necessarius subsp. necessarius (strain STIR1), this protein is tRNA-cytidine(32) 2-sulfurtransferase.